The primary structure comprises 117 residues: Movement protein TGB2 (117 aa).

At 1–11 (MPLIPPPNPQK) the chain is on the cytoplasmic side. A helical membrane pass occupies residues 12–32 (TYQIAVLALGLVLLLAFVLIS). Residues 33–78 (DHSPKVGDHLHNLPFGGEYKDGTKTIKYFQRPNQHSLSKTLAKSHN) are Lumenal-facing. A helical membrane pass occupies residues 79–99 (TTIFLIILGLIGTLHGLHYFS). Over 100–117 (NNRRISSSLHCVLCQNKH) the chain is Cytoplasmic.

The protein belongs to the Tymovirales TGBp2 protein family.

It localises to the host endoplasmic reticulum membrane. Its function is as follows. Plays a role in viral cell-to-cell propagation, by facilitating genome transport to neighboring plant cells through plasmosdesmata,. The chain is Movement protein TGB2 from Trifolium (WCMV).